The primary structure comprises 401 residues: cAMP-dependent protein kinase type II-alpha regulatory subunit (401 aa).

At Ser-2 the chain carries N-acetylserine. Residues Ser-2–Leu-135 are dimerization and phosphorylation. Residues Ala-43–Ala-65 are disordered. Residues Arg-46–Ser-58 show a composition bias toward low complexity. Phosphoserine occurs at positions 48, 75, and 77. Ser-96 carries the post-translational modification Phosphoserine; by PKA. Residues Leu-136 to Pro-257, Glu-205, Arg-214, Leu-258 to Gln-401, Glu-335, and Arg-344 each bind 3',5'-cyclic AMP. Thr-212 carries the phosphothreonine; by PDPK1 modification. A phosphoserine mark is found at Ser-347 and Ser-392.

The protein belongs to the cAMP-dependent kinase regulatory chain family. The inactive form of the enzyme is composed of two regulatory chains and two catalytic chains. Activation by cAMP produces two active catalytic monomers and a regulatory dimer that binds four cAMP molecules. Interacts with AKAP4 and CBFA2T3. Interacts with the phosphorylated form of PJA2. Interacts with MYRIP; this interaction may link PKA to components of the exocytosis machinery, thus facilitating exocytosis, including insulin release. Forms a complex composed of PRKAR2A, GSK3B and GSKIP through GSKIP interaction; facilitates PKA-induced phosphorylation and regulates GSK3B activity. Interacts with ADCY8; inhibits adenylate cyclase activity through PKA phosphorylation. A second phosphorylation site has not been located. In terms of processing, phosphorylation of Thr-212 by PDPK1 seems to attenuate the activity of PKA, perhaps by strengthening interaction between the regulatory and the catalytic subunits. Four types of regulatory chains are found: I-alpha, I-beta, II-alpha, and II-beta. Their expression varies among tissues and is in some cases constitutive and in others inducible.

It is found in the cytoplasm. It localises to the cell membrane. In terms of biological role, regulatory subunit of the cAMP-dependent protein kinases involved in cAMP signaling in cells. Type II regulatory chains mediate membrane association by binding to anchoring proteins, including the MAP2 kinase. The chain is cAMP-dependent protein kinase type II-alpha regulatory subunit (PRKAR2A) from Bos taurus (Bovine).